Reading from the N-terminus, the 190-residue chain is GTP cyclohydrolase 1 (190 aa).

Zn(2+)-binding residues include C75, H78, and C146.

It belongs to the GTP cyclohydrolase I family. In terms of assembly, homomer.

It catalyses the reaction GTP + H2O = 7,8-dihydroneopterin 3'-triphosphate + formate + H(+). It participates in cofactor biosynthesis; 7,8-dihydroneopterin triphosphate biosynthesis; 7,8-dihydroneopterin triphosphate from GTP: step 1/1. The sequence is that of GTP cyclohydrolase 1 from Campylobacter lari (strain RM2100 / D67 / ATCC BAA-1060).